The primary structure comprises 598 residues: MESGNIVNAQPELSGIIDGSKSYMYEQLWKLCAGPLCDIPKLGEKIYYFPQGNIELVEASTREELNELKPICDLPSKLQCRVIAIQLKVENNSDETYAEITLMPDTTQVVIPTQNENQFRPLVNSFTKVLTASDTSGGFFVPKKHAIECLPPLDMSQPLPTQELLATDLHGNQWRFNHNYRGTPQRHLLTTGWNAFTTSKKLVAGDVIVFVRGETGELRVGIRRAGHQQGNIPSSIISIESMRHGVIASAKHAFDNQCMFIVVYKPRSSQFIVSYDKFLDAVNNKFNVGSRFTMRFEGDDFSERRYFGTIIGVSDFSPHWKCSEWRNLEVQWDEFASFSRPNKVSPWEIEHLMPALNVPRPSLLKNKRLREVNEIGSSSSHLLPPILTQGQEIGQLSVASPMNISLTYRDTTEDVMNPSRLLMSYPVQPMPKLNYNNQMVTQIEENITTKTGTNFRLFGVSLVTPSVIKDPIEEIGSEISKLTEGKKFGQSQTLRSPTEIQSKQFSSTRTCTKVQMQGVTIERAVDLSVLNGYDQLILELEELFDLKGQLQTRNQWEIAFTDSDDDKMLVGDDPWPEFCNMVKKILIFKRGGQKLEVQ.

Positions Asn-124 to Gly-226 form a DNA-binding region, TF-B3. Residues Arg-509 to Arg-590 form the PB1 domain.

It belongs to the ARF family. As to quaternary structure, homodimers and heterodimers.

It is found in the nucleus. In terms of biological role, auxin response factors (ARFs) are transcriptional factors that bind specifically to the DNA sequence 5'-TGTCTC-3' found in the auxin-responsive promoter elements (AuxREs). Could act as transcriptional activator or repressor. Formation of heterodimers with Aux/IAA proteins may alter their ability to modulate early auxin response genes expression. The sequence is that of Auxin response factor 22 (ARF22) from Arabidopsis thaliana (Mouse-ear cress).